A 218-amino-acid chain; its full sequence is 7-cyano-7-deazaguanine synthase (218 aa).

ATP is bound at residue 9–19 (YSGGMDSFTVL). Positions 185, 193, 196, and 199 each coordinate Zn(2+).

This sequence belongs to the QueC family. Zn(2+) is required as a cofactor.

The catalysed reaction is 7-carboxy-7-deazaguanine + NH4(+) + ATP = 7-cyano-7-deazaguanine + ADP + phosphate + H2O + H(+). The protein operates within purine metabolism; 7-cyano-7-deazaguanine biosynthesis. Functionally, catalyzes the ATP-dependent conversion of 7-carboxy-7-deazaguanine (CDG) to 7-cyano-7-deazaguanine (preQ(0)). In Pseudoalteromonas translucida (strain TAC 125), this protein is 7-cyano-7-deazaguanine synthase.